Here is a 35-residue protein sequence, read N- to C-terminus: Photosystem II reaction center protein T (35 aa).

The helical transmembrane segment at 3–23 (SVAYILILTLAIGVLFFAIAF) threads the bilayer.

It belongs to the PsbT family. In terms of assembly, PSII is composed of 1 copy each of membrane proteins PsbA, PsbB, PsbC, PsbD, PsbE, PsbF, PsbH, PsbI, PsbJ, PsbK, PsbL, PsbM, PsbT, PsbX, PsbY, PsbZ, Psb30/Ycf12, peripheral proteins PsbO, CyanoQ (PsbQ), PsbU, PsbV and a large number of cofactors. It forms dimeric complexes.

The protein localises to the cellular thylakoid membrane. Its function is as follows. Found at the monomer-monomer interface of the photosystem II (PS II) dimer, plays a role in assembly and dimerization of PSII. PSII is a light-driven water plastoquinone oxidoreductase, using light energy to abstract electrons from H(2)O, generating a proton gradient subsequently used for ATP formation. The chain is Photosystem II reaction center protein T from Nostoc sp. (strain PCC 7120 / SAG 25.82 / UTEX 2576).